A 142-amino-acid chain; its full sequence is SLSDKDKAAVRALWSKIGKSADAIGNDALSRMIVVYPQTKTYFSHWPDVTPGSPHIKAHGKKVMGGIALAVSKIDDLKTGLMELSEQHAYKLRVDPANFKILNHCILVVISTMFPKEFTPEAHVSLDKFLSGVALALAERYR.

An N-acetylserine modification is found at Ser-1. The region spanning 1–142 (SLSDKDKAAV…VALALAERYR (142 aa)) is the Globin domain. His-59 serves as a coordination point for O2. His-88 contributes to the heme b binding site.

This sequence belongs to the globin family. As to quaternary structure, hb1 is a heterotetramer of two alpha chains and two beta chains. HbC is a heterotetramer of two alpha chains and two beta-C chains. As to expression, red blood cells.

In terms of biological role, involved in oxygen transport from gills to the various peripheral tissues. The chain is Hemoglobin subunit alpha (hba) from Trematomus bernacchii (Emerald rockcod).